Consider the following 535-residue polypeptide: T-complex protein 1 subunit zeta 2 (535 aa).

It belongs to the TCP-1 chaperonin family. Heterooligomeric complex of about 850 to 900 kDa that forms two stacked rings, 12 to 16 nm in diameter.

It localises to the cytoplasm. Its function is as follows. Molecular chaperone; assists the folding of proteins upon ATP hydrolysis. Known to play a role, in vitro, in the folding of actin and tubulin. In Arabidopsis thaliana (Mouse-ear cress), this protein is T-complex protein 1 subunit zeta 2.